The primary structure comprises 609 residues: Probable ubiquitin-conjugating enzyme E2 25 (609 aa).

Disordered stretches follow at residues 70–99 (EEDE…LDPE) and 151–185 (ADKE…SQFS). Residues 156–178 (ASSSKSSHANNGNNSSKKATKAS) show a composition bias toward low complexity. The region spanning 332 to 492 (DWAKRIQDEW…TFILSLKTMV (161 aa)) is the UBC core domain. Catalysis depends on C418, which acts as the Glycyl thioester intermediate.

It belongs to the ubiquitin-conjugating enzyme family. As to expression, expressed in seeds, pistils, siliques, hypocotyls and leaves.

The catalysed reaction is S-ubiquitinyl-[E1 ubiquitin-activating enzyme]-L-cysteine + [E2 ubiquitin-conjugating enzyme]-L-cysteine = [E1 ubiquitin-activating enzyme]-L-cysteine + S-ubiquitinyl-[E2 ubiquitin-conjugating enzyme]-L-cysteine.. It functions in the pathway protein modification; protein ubiquitination. In terms of biological role, accepts the ubiquitin from the E1 complex and catalyzes its covalent attachment to other proteins. The protein is Probable ubiquitin-conjugating enzyme E2 25 (UBC25) of Arabidopsis thaliana (Mouse-ear cress).